We begin with the raw amino-acid sequence, 39 residues long: Photosystem II reaction center protein I (39 aa).

A helical membrane pass occupies residues 6–26 (ISVYSVVFFFIGIFMFGFLAS).

This sequence belongs to the PsbI family. PSII is composed of 1 copy each of membrane proteins PsbA, PsbB, PsbC, PsbD, PsbE, PsbF, PsbH, PsbI, PsbJ, PsbK, PsbL, PsbM, PsbT, PsbX, PsbY, PsbZ, Psb30/Ycf12, peripheral proteins PsbO, CyanoQ (PsbQ), PsbU, PsbV and a large number of cofactors. It forms dimeric complexes.

Its subcellular location is the cellular thylakoid membrane. In terms of biological role, one of the components of the core complex of photosystem II (PSII), required for its stability and/or assembly. PSII is a light-driven water:plastoquinone oxidoreductase that uses light energy to abstract electrons from H(2)O, generating O(2) and a proton gradient subsequently used for ATP formation. It consists of a core antenna complex that captures photons, and an electron transfer chain that converts photonic excitation into a charge separation. This is Photosystem II reaction center protein I from Synechococcus sp. (strain RCC307).